Consider the following 214-residue polypeptide: Adenylate kinase (214 aa).

10–15 (GAGKGT) is a binding site for ATP. Residues 30–59 (STGDMLRAAIKAGTELGKQAKAVIDAGQLV) are NMP. AMP contacts are provided by residues T31, R36, 57-59 (QLV), 85-88 (GFPR), and Q92. The tract at residues 122–159 (GRRAHLPSGRTYHVVYNPPKVEGKDDVTGEDLVVRDDD) is LID. ATP is bound by residues R123 and 132-133 (TY). Residues R156 and R167 each contribute to the AMP site. ATP is bound at residue K200.

Belongs to the adenylate kinase family. As to quaternary structure, monomer.

It localises to the cytoplasm. It carries out the reaction AMP + ATP = 2 ADP. It participates in purine metabolism; AMP biosynthesis via salvage pathway; AMP from ADP: step 1/1. Functionally, catalyzes the reversible transfer of the terminal phosphate group between ATP and AMP. Plays an important role in cellular energy homeostasis and in adenine nucleotide metabolism. The protein is Adenylate kinase of Vibrio parahaemolyticus serotype O3:K6 (strain RIMD 2210633).